Reading from the N-terminus, the 136-residue chain is Nuclear receptor 2C2-associated protein (136 aa).

The protein belongs to the NR2C2AP family.

It localises to the nucleus. Functionally, may act as a repressor of nr2c2-mediated transactivation by suppressing the binding between nr2c2 and its response element in target genes. The sequence is that of Nuclear receptor 2C2-associated protein (nr2c2ap) from Xenopus laevis (African clawed frog).